Reading from the N-terminus, the 136-residue chain is Large ribosomal subunit protein uL16 (136 aa).

The protein belongs to the universal ribosomal protein uL16 family. In terms of assembly, part of the 50S ribosomal subunit.

Functionally, binds 23S rRNA and is also seen to make contacts with the A and possibly P site tRNAs. This is Large ribosomal subunit protein uL16 from Shewanella halifaxensis (strain HAW-EB4).